The primary structure comprises 123 residues: Ribosome-binding factor A (123 aa).

It belongs to the RbfA family. As to quaternary structure, monomer. Binds 30S ribosomal subunits, but not 50S ribosomal subunits or 70S ribosomes.

The protein resides in the cytoplasm. One of several proteins that assist in the late maturation steps of the functional core of the 30S ribosomal subunit. Associates with free 30S ribosomal subunits (but not with 30S subunits that are part of 70S ribosomes or polysomes). Required for efficient processing of 16S rRNA. May interact with the 5'-terminal helix region of 16S rRNA. This is Ribosome-binding factor A from Koribacter versatilis (strain Ellin345).